The following is a 363-amino-acid chain: 3-dehydroquinate synthase (363 aa).

NAD(+)-binding positions include 103 to 107 (GAVGD), 127 to 128 (TT), K139, K148, and 166 to 169 (FSET). Zn(2+) contacts are provided by E181, H243, and H260.

It belongs to the sugar phosphate cyclases superfamily. Dehydroquinate synthase family. It depends on Co(2+) as a cofactor. Requires Zn(2+) as cofactor. NAD(+) serves as cofactor.

Its subcellular location is the cytoplasm. The enzyme catalyses 7-phospho-2-dehydro-3-deoxy-D-arabino-heptonate = 3-dehydroquinate + phosphate. It functions in the pathway metabolic intermediate biosynthesis; chorismate biosynthesis; chorismate from D-erythrose 4-phosphate and phosphoenolpyruvate: step 2/7. In terms of biological role, catalyzes the conversion of 3-deoxy-D-arabino-heptulosonate 7-phosphate (DAHP) to dehydroquinate (DHQ). This chain is 3-dehydroquinate synthase, found in Lysinibacillus sphaericus (strain C3-41).